A 386-amino-acid polypeptide reads, in one-letter code: Alanine racemase (386 aa).

Lys-48 acts as the Proton acceptor; specific for D-alanine in catalysis. Residue Lys-48 is modified to N6-(pyridoxal phosphate)lysine. Residue Arg-147 coordinates substrate. Tyr-279 acts as the Proton acceptor; specific for L-alanine in catalysis. Met-327 is a substrate binding site.

Belongs to the alanine racemase family. Requires pyridoxal 5'-phosphate as cofactor.

The enzyme catalyses L-alanine = D-alanine. It functions in the pathway amino-acid biosynthesis; D-alanine biosynthesis; D-alanine from L-alanine: step 1/1. Functionally, catalyzes the interconversion of L-alanine and D-alanine. May also act on other amino acids. The chain is Alanine racemase (alr) from Prochlorococcus marinus (strain SARG / CCMP1375 / SS120).